Reading from the N-terminus, the 781-residue chain is Catenin beta-1 (781 aa).

An N-acetylalanine modification is found at A2. The interval 2 to 23 is interaction with VCL; it reads ATQADLMELDMAMEPDRKAAVS. S23 is modified (phosphoserine; by GSK3-beta; alternate). O-linked (GlcNAc) serine; alternate glycosylation occurs at S23. The residue at position 29 (S29) is a Phosphoserine; by GSK3-beta. S33 and S37 each carry phosphoserine; by GSK3-beta and HIPK2. A disordered region spans residues 34-57; that stretch reads GIHSGATTTAPSLSGKGNPEEEDV. T41 bears the Phosphothreonine; by GSK3-beta mark. S45 carries the phosphoserine modification. Position 49 is an N6-acetyllysine (K49). Position 64 is a phosphotyrosine; by PTK6 (Y64). Y142 is modified (phosphotyrosine; by FYN and PTK6). 12 ARM repeats span residues 151 to 191, 193 to 234, 235 to 276, 277 to 318, 319 to 360, 361 to 389, 400 to 441, 442 to 484, 489 to 530, 531 to 571, 594 to 636, and 637 to 666; these read RAIP…IMRS, QMVS…IFKS, GGIP…VRLA, GGLQ…ILAS, GGPQ…IVEA, GGMQALGPHLTDPSQRLVQNCLWTLRNLS, GLLG…VCQV, GGIE…AQNA, YGLP…LREQ, GAIP…EIVE, NTIP…AEGA, and TAPLTELLHSRNEGVATYAAAVLFRMSEDK. Residues 156–178 form an interaction with BCL9 region; that stretch reads LTKLLNDEDQVVVNKAAVMVHQL. S191 carries the post-translational modification Phosphoserine. At S246 the chain carries Phosphoserine; by CDK5. A phosphotyrosine mark is found at Y331 and Y333. S552 carries the post-translational modification Phosphoserine. Position 556 is a phosphothreonine (T556). The residue at position 619 (C619) is an S-nitrosocysteine. Residue S675 is modified to Phosphoserine. The segment at 720–781 is disordered; sequence HSGGYGQDAL…NQLAWFDTDL (62 aa). Residues 734–745 are compositionally biased toward basic and acidic residues; the sequence is MMEHEMGGHHPG. Positions 772–781 are interaction with SCRIB; sequence NQLAWFDTDL.

This sequence belongs to the beta-catenin family. As to quaternary structure, two separate complex-associated pools are found in the cytoplasm. The majority is present as component of an E-cadherin/ catenin adhesion complex composed of at least E-cadherin/CDH1 and beta-catenin/CTNNB1, and possibly alpha-catenin/CTNNA1; the complex is located to adherens junctions. The stable association of CTNNA1 is controversial as CTNNA1 was shown not to bind to F-actin when assembled in the complex. Alternatively, the CTNNA1-containing complex may be linked to F-actin by other proteins such as LIMA1. Another cytoplasmic pool is part of a large complex containing AXIN1, AXIN2, APC, CSNK1A1 and GSK3B that promotes phosphorylation on N-terminal Ser and Thr residues and ubiquitination of CTNNB1. Interacts directly with AXIN1; the interaction is regulated by CK2 via BTRC and its subsequent degradation by the proteasome. Interacts directly with AXIN1; the interaction is regulated by CDK2 phosphorylation. Wnt-dependent activation of DVL antagonizes the action of GSK3B. When GSK3B activity is inhibited the complex dissociates, CTNNB1 is dephosphorylated and is no longer targeted for destruction. The stabilized protein translocates to the nucleus, where it binds TCF/LEF-1 family members, BCL9, BCL9L and possibly also RUVBL1 and CHD8. Binds CTNNBIP and EP300. CTNNB1 forms a ternary complex with LEF1 and EP300 that is disrupted by CTNNBIP1 binding. Interacts with TAX1BP3 (via the PDZ domain); this interaction inhibits the transcriptional activity of CTNNB1. Interacts with AJAP1, BAIAP1, CARM1, CTNNA3, CXADR and PCDH11Y. Binds NHERF1. Interacts with GLIS2. Interacts with XIRP1. Interacts with PTPRU (via the cytoplasmic juxtamembrane domain) and with SLC30A9. Interacts with EMD. Interacts with SCRIB. Interacts with TNIK and TCF7L2. Interacts with SESTD1 and TRPC4. Interacts directly with AXIN1; the interaction is regulated by CDK2 phosphorylation of AXIN1. Interacts with CAV1. Interacts with TRPV4. The TRPV4 and CTNNB1 complex can interact with CDH1. Interacts with VCL. Interacts with PTPRJ. Interacts with PKT7. Interacts with NANOS1. Interacts with CDK2, NDRG2, NEK2 and CDK5. Found in a complex composed of MACF1, APC, AXIN1, CTNNB1 and GSK3B. Interacts with PTK6. Interacts with SOX7; this interaction may lead to proteasomal degradation of active CTNNB1 and thus inhibition of Wnt/beta-catenin-stimulated transcription. Identified in a complex with HINT1 and MITF. Interacts with FHIT. The CTNNB1 and TCF4 complex interacts with PML. Interacts with FERMT2. Identified in a complex with TCF4 and FERMT2. Interacts with RAPGEF2. Interacts with FAT1 (via the cytoplasmic domain). Interacts with RORA. May interact with P-cadherin/CDH3. Interacts with RNF220. Interacts with CTNND2. Interacts (via the C-terminal region) with CBY1. The complex composed, at least, of APC, CTNNB1 and GSK3B interacts with JPT1; the interaction requires the inactive form of GSK3B (phosphorylated at 'Ser-9'). Interacts with DLG5. Interacts with FAM53B; promoting translocation to the nucleus. Interacts with TMEM170B. Interacts with AHI1. Interacts with GID8. Component of an cadherin:catenin adhesion complex composed of at least of CDH26, beta-catenin/CTNNB1, alpha-catenin/CTNNA1 and p120 catenin/CTNND1. Forms a complex comprising APPL1, RUVBL2, APPL2, HDAC1 and HDAC2. Interacts with IRF2BPL; mediates the ubiquitination and degradation of CTNNB1. Interacts with AMFR. Interacts with LMBR1L. Interacts with SOX30; prevents interaction of CTNNB1 with TCF7L2/TCF4 and leads to inhibition of Wnt signaling. Interacts with SOX9; inhibiting CTNNB1 activity by competing with the binding sites of TCF/LEF within CTNNB1, thereby inhibiting the Wnt signaling. Interacts with SPN/CD43 cytoplasmic tail. Interacts (when phosphorylated at Tyr-333) with isoform M2 of PKM (PKM2); promoting transcription activation. Interacts with PKP2 (via HEAD domain). Interacts with CDH1. Interacts (when unphosphorylated) with FLYWCH1, perhaps preventing interaction of CTNNB1 with TCF4, and thereby regulating transcription activation; phosphorylation of CTNNB1 may inhibit the interaction. Interacts (via the central armadillo domains) with probable transcriptional regulator ADNP (via N-terminal region); interaction is direct and stabilizes CTNNB1 by modulating its phosphorylation by glycogen synthase kinase-3 beta GSK3B. Interacts with NR5A2. Interacts with DSG2; the interaction promotes localization of CTNNB1 at cell junctions thus reducing its nuclear localization and subsequent transcription of CTNNB1/TCF-target genes. Phosphorylation by GSK3B requires prior phosphorylation of Ser-45 by another kinase. Phosphorylation proceeds then from Thr-41 to Ser-33. Phosphorylated by NEK2. EGF stimulates tyrosine phosphorylation. Phosphorylated on Ser-33 and Ser-37 by HIPK2. This phosphorylation triggers proteasomal degradation. Phosphorylation at Ser-552 by AMPK promotes stabilization of the protein, enhancing TCF/LEF-mediated transcription. Phosphorylation on Ser-191 and Ser-246 by CDK5. Phosphorylation by CDK2 regulates insulin internalization. Phosphorylation by PTK6 at Tyr-64, Tyr-142, Tyr-331 and/or Tyr-333 with the predominant site at Tyr-64 is not essential for inhibition of transcriptional activity. Phosphorylation by SRC at Tyr-333 promotes interaction with isoform M2 of PKM (PKM2); promoting transcription activation. Post-translationally, ubiquitinated by the SCF(BTRC) E3 ligase complex when phosphorylated by GSK3B, leading to its degradation. Ubiquitinated by a E3 ubiquitin ligase complex containing UBE2D1, SIAH1, CACYBP/SIP, SKP1, APC and TBL1X, leading to its subsequent proteasomal degradation. Ubiquitinated and degraded following interaction with SOX9. Ubiquitinated via 'Lys-11'- and 'Lys-29'-linked ubiquitin chains by UBR5, leading to its stabilization. In terms of processing, S-nitrosylation at Cys-619 within adherens junctions promotes VEGF-induced, NO-dependent endothelial cell permeability by disrupting interaction with E-cadherin, thus mediating disassembly adherens junctions. O-glycosylation at Ser-23 decreases nuclear localization and transcriptional activity, and increases localization to the plasma membrane and interaction with E-cadherin CDH1. Post-translationally, deacetylated at Lys-49 by SIRT1. As to expression, expressed in the testis.

It localises to the cytoplasm. Its subcellular location is the nucleus. The protein localises to the cytoskeleton. It is found in the cell junction. The protein resides in the adherens junction. It localises to the cell membrane. Its subcellular location is the microtubule organizing center. The protein localises to the centrosome. It is found in the spindle pole. The protein resides in the synapse. It localises to the cilium basal body. In terms of biological role, key downstream component of the canonical Wnt signaling pathway. In the absence of Wnt, forms a complex with AXIN1, AXIN2, APC, CSNK1A1 and GSK3B that promotes phosphorylation on N-terminal Ser and Thr residues and ubiquitination of CTNNB1 via BTRC and its subsequent degradation by the proteasome. In the presence of Wnt ligand, CTNNB1 is not ubiquitinated and accumulates in the nucleus, where it acts as a coactivator for transcription factors of the TCF/LEF family, leading to activate Wnt responsive genes. Also acts as a coactivator for other transcription factors, such as NR5A2. Promotes epithelial to mesenchymal transition/mesenchymal to epithelial transition (EMT/MET) via driving transcription of CTNNB1/TCF-target genes. Involved in the regulation of cell adhesion, as component of an E-cadherin:catenin adhesion complex. Acts as a negative regulator of centrosome cohesion. Involved in the CDK2/PTPN6/CTNNB1/CEACAM1 pathway of insulin internalization. Blocks anoikis of malignant kidney and intestinal epithelial cells and promotes their anchorage-independent growth by down-regulating DAPK2. Disrupts PML function and PML-NB formation by inhibiting RANBP2-mediated sumoylation of PML. Promotes neurogenesis by maintaining sympathetic neuroblasts within the cell cycle. Involved in chondrocyte differentiation via interaction with SOX9: SOX9-binding competes with the binding sites of TCF/LEF within CTNNB1, thereby inhibiting the Wnt signaling. Acts as a positive regulator of odontoblast differentiation during mesenchymal tooth germ formation, via promoting the transcription of differentiation factors such as LEF1, BMP2 and BMP4. Activity is repressed in a MSX1-mediated manner at the bell stage of mesenchymal tooth germ formation which prevents premature differentiation of odontoblasts. This is Catenin beta-1 from Rattus norvegicus (Rat).